Reading from the N-terminus, the 1387-residue chain is Dicer-like protein 2-1 (1387 aa).

The Helicase ATP-binding domain maps to 26–205 (MFEASLKENI…LLKIESNLDA (180 aa)). 39 to 46 (MGTGSGKT) serves as a coordination point for ATP. The DEAH box motif lies at 146–149 (DEAH). The Helicase C-terminal domain maps to 370-535 (KFRSLLEFLD…AYEDDERRLR (166 aa)). One can recognise a Dicer dsRNA-binding fold domain in the interval 565-659 (AVAHLNHFCA…LPFKRNLELK (95 aa)). RNase III domains follow at residues 915–1055 (ATRL…IDGG) and 1094–1277 (DDHL…IDSH). Mg(2+)-binding residues include Glu1133, Asp1263, and Glu1266.

The protein belongs to the helicase family. Dicer subfamily. The cofactor is Mg(2+). It depends on Mn(2+) as a cofactor.

Its function is as follows. Dicer-like endonuclease involved in cleaving double-stranded RNA in the RNA interference (RNAi) pathway. Produces 21 to 25 bp dsRNAs (siRNAs) which target the selective destruction of homologous RNAs leading to sequence-specific suppression of gene expression, called post-transcriptional gene silencing (PTGS). Part of a broad host defense response against viral infection and transposons. In Aspergillus niger (strain ATCC MYA-4892 / CBS 513.88 / FGSC A1513), this protein is Dicer-like protein 2-1 (dcl2-1).